The following is a 100-amino-acid chain: ESAT-6-like protein EsxB (100 aa).

The protein belongs to the WXG100 family. CFP-10 subfamily. Forms a tight 1:1 complex with EsxA.

It localises to the secreted. Functionally, a secreted protein that might play a role in virulence. Might serve as a chaperone to prevent uncontrolled membrane lysis by its partner EsxA. This chain is ESAT-6-like protein EsxB (esxB), found in Mycobacterium leprae (strain TN).